A 242-amino-acid chain; its full sequence is RNA transcription, translation and transport factor protein (242 aa).

Belongs to the RTRAF family. As to quaternary structure, homodimer. Component of a tRNA-splicing ligase complex.

Its subcellular location is the nucleus. It is found in the cytoplasm. It localises to the cytosol. The protein resides in the perinuclear region. The protein localises to the cytoskeleton. Its subcellular location is the microtubule organizing center. It is found in the centrosome. RNA-binding protein involved in modulation of mRNA transcription by Polymerase II. Component of the tRNA-splicing ligase complex. In Danio rerio (Zebrafish), this protein is RNA transcription, translation and transport factor protein.